A 112-amino-acid chain; its full sequence is Large ribosomal subunit protein eL30x (112 aa).

It belongs to the eukaryotic ribosomal protein eL30 family.

The chain is Large ribosomal subunit protein eL30x (RPL30C) from Arabidopsis thaliana (Mouse-ear cress).